Here is a 129-residue protein sequence, read N- to C-terminus: Lysozyme C-1/C-2 (129 aa).

The region spanning 1–129 (KVFERCELAR…VSSYVEGCTL (129 aa)) is the C-type lysozyme domain. 4 disulfide bridges follow: Cys6–Cys127, Cys30–Cys115, Cys65–Cys81, and Cys77–Cys95. Residues Glu35 and Asp53 contribute to the active site.

Belongs to the glycosyl hydrolase 22 family. As to quaternary structure, monomer.

It catalyses the reaction Hydrolysis of (1-&gt;4)-beta-linkages between N-acetylmuramic acid and N-acetyl-D-glucosamine residues in a peptidoglycan and between N-acetyl-D-glucosamine residues in chitodextrins.. Its function is as follows. Lysozymes have primarily a bacteriolytic function; those in tissues and body fluids are associated with the monocyte-macrophage system and enhance the activity of immunoagents. This Axis axis (Axis deer) protein is Lysozyme C-1/C-2.